A 271-amino-acid polypeptide reads, in one-letter code: Ferric vulnibactin reductase VuuB (271 aa).

The FAD-binding FR-type domain occupies 8-131 (VYPMLLDFVR…IGPAGPDPLI (124 aa)).

Belongs to the SIP oxidoreductase family. As to quaternary structure, monomer. The cofactor is FAD.

Its subcellular location is the cytoplasm. It carries out the reaction 2 a Fe(II)-siderophore + NAD(+) + H(+) = 2 a Fe(III)-siderophore + NADH. Functionally, ferric-siderophore reductase involved in iron removal from the siderophores after their transport into the cell. Acts as a major ferric-vulnibactin reductase catalyzing the reduction of Fe(3+)-vulnibactin, a catecholate siderophore synthesized by V.vulnificus. The protein is Ferric vulnibactin reductase VuuB of Vibrio vulnificus (strain CMCP6).